The sequence spans 365 residues: MPRPILATIHPAAVHHNLERARRAAPDARVWAVVKANAYGHGIERVFEGLRAADGFALLDLAEAERVRALGWRGPILLLEGVFEPRDLELCSRLGLWHAVHCDAQIDWLAAHKTQVPHRVFLKMNSGMNRLGFTPERYRSAWARLNALPQVDEISCMTHFSDADGPRGIAHQVQAFQTATRDLPGERCIANSAALLRHGGDAQVRLDWVRAGIVLYGSAPDHPERRAADWDLQPTMTLASRIIGVQQLQAGDTVGYGSRFTAQGPLGIGVVACGYADGYPRHCDTGTPVLVNGVRTRTIGRVSMDMLAVDLTPVPGAGLGAEVTLWGRAANGAVLPIDEVAQAGGTIGYELMCALAPRVPVVVQD.

Lys-35 functions as the Proton acceptor; specific for D-alanine in the catalytic mechanism. Lys-35 bears the N6-(pyridoxal phosphate)lysine mark. Arg-130 is a substrate binding site. Residue Tyr-256 is the Proton acceptor; specific for L-alanine of the active site. Residue Met-304 participates in substrate binding.

This sequence belongs to the alanine racemase family. It depends on pyridoxal 5'-phosphate as a cofactor.

The catalysed reaction is L-alanine = D-alanine. It participates in amino-acid biosynthesis; D-alanine biosynthesis; D-alanine from L-alanine: step 1/1. Functionally, catalyzes the interconversion of L-alanine and D-alanine. May also act on other amino acids. This is Alanine racemase (alr) from Acidovorax ebreus (strain TPSY) (Diaphorobacter sp. (strain TPSY)).